Here is a 141-residue protein sequence, read N- to C-terminus: Hemoglobin subunit alpha-3 (141 aa).

Ser1 is subject to N-acetylserine. One can recognise a Globin domain in the interval 1 to 141 (SLSASEKAAV…VSAVLTSKYR (141 aa)). His58 contacts O2. His87 is a heme b binding site.

It belongs to the globin family. Heterotetramer of two alpha chains and two beta chains. As to expression, red blood cells.

This is a tadpole (larval) alpha chain. The protein is Hemoglobin subunit alpha-3 of Aquarana catesbeiana (American bullfrog).